Reading from the N-terminus, the 2078-residue chain is Nascent polypeptide-associated complex subunit alpha, muscle-specific form (2078 aa).

Disordered stretches follow at residues 1-21 (MPGEATETVPATEQELPQPQA), 37-96 (ALGQ…LGTA), 595-614 (LGEPLPIGKPASSMTSPLGV), and 732-1944 (KSVP…KAMS). Composition is skewed to polar residues over residues 9-21 (VPATEQELPQPQA) and 60-75 (AANQASPFPSPSTIAS). Residues 775-786 (SGASATASSKGT) are compositionally biased toward low complexity. Residues 837 to 847 (PENSLSFQGSK) show a composition bias toward polar residues. The residue at position 917 (S917) is a Phosphoserine. Positions 933 to 1020 (SPSPKGAPTP…PPAVTPPSPK (88 aa)) are enriched in pro residues. Positions 1045-1067 (GSPAATPLPKGAPTTPAATLPSP) are enriched in low complexity. Over residues 1080 to 1113 (PTPPAATPPSPKGGPATPSPKGAPMPPAATPPSP) the composition is skewed to pro residues. Low complexity predominate over residues 1114-1130 (KGGLATPPHKGAPTTPA). Composition is skewed to pro residues over residues 1131–1147 (ATPPSPKGGLATPPPKG) and 1154–1170 (ATPPSPKGGLATPPPKG). S1181 is subject to Phosphoserine. Low complexity-rich tracts occupy residues 1183-1199 (KGGLATPSPKGAPTTPA), 1206-1222 (KGGLATPSPKGAPTTPA), and 1229-1245 (KGGLATPSPKGAPTTPA). 2 stretches are compositionally biased toward pro residues: residues 1246 to 1270 (ATPPSPKGGPATPPPKGAPTPPAAT) and 1292 to 1344 (VTPP…PSPK). Residues 1345-1366 (GTPTLPATTPSSKGGPTTPSSK) show a composition bias toward low complexity. Phosphoserine occurs at positions 1397 and 1474. Over residues 1470–1481 (VTPPSPKEPPAP) the composition is skewed to pro residues. Over residues 1485-1507 (ATSSSPKKAPATPAPMGAPTLPA) the composition is skewed to low complexity. Residues 1611 to 1625 (KEAPTPPAVTPPSPE) are compositionally biased toward pro residues. Over residues 1626–1637 (KGPATPAPKGTP) the composition is skewed to low complexity. A compositionally biased stretch (polar residues) spans 1647–1656 (LKDSPTSPAS). Residues 1744 to 1756 (DSSKTAKGKDASH) show a composition bias toward basic and acidic residues. Residues 1794–1811 (PSPPVSLPLAPSPVPTLP) show a composition bias toward pro residues. Residues 1841–1845 (LPLIP) carry the PXLXP motif. The span at 1876–1891 (SAKQPVTKNNKGSGTE) shows a compositional bias: polar residues. Positions 1892–1905 (SDSDESVPELEEQD) are enriched in acidic residues. Phosphoserine; by ILK1 is present on S1906. Low complexity predominate over residues 1907–1920 (TQATTQQAQLAAAA). The interval 1932-1943 (QSRSEKKARKAM) is required for DNA-binding. The NAC-A/B domain maps to 1933-1998 (SRSEKKARKA…AKIEDLSQQA (66 aa)). At S1995 the chain carries Phosphoserine. The residue at position 2005 (K2005) is an N6-acetyllysine; alternate. K2005 participates in a covalent cross-link: Glycyl lysine isopeptide (Lys-Gly) (interchain with G-Cter in SUMO2); alternate. A Phosphothreonine; by GSK3-beta modification is found at T2022. Residue T2024 is modified to Phosphothreonine. A phosphoserine mark is found at S2029, S2049, S2054, and S2066. The UBA domain maps to 2039 to 2078 (VEVKDIELVMSQANVSRAKAVRALKNNSNDIVNAIMELTM).

Interacts (via PXLXP motif) with the muscle-restricted histone methyltransferase SMYD1 (via MYND-type zinc finger).

It is found in the cytoplasm. The protein resides in the nucleus. Functionally, cardiac- and muscle-specific transcription factor. May act to regulate the expression of genes involved in the development of myotubes. Plays a critical role in ventricular cardiomyocyte expansion and regulates postnatal skeletal muscle growth and regeneration. Involved in the organized assembly of thick and thin filaments of myofibril sarcomeres. In Homo sapiens (Human), this protein is Nascent polypeptide-associated complex subunit alpha, muscle-specific form (NACA).